The chain runs to 160 residues: SsrA-binding protein (160 aa).

It belongs to the SmpB family.

It is found in the cytoplasm. Its function is as follows. Required for rescue of stalled ribosomes mediated by trans-translation. Binds to transfer-messenger RNA (tmRNA), required for stable association of tmRNA with ribosomes. tmRNA and SmpB together mimic tRNA shape, replacing the anticodon stem-loop with SmpB. tmRNA is encoded by the ssrA gene; the 2 termini fold to resemble tRNA(Ala) and it encodes a 'tag peptide', a short internal open reading frame. During trans-translation Ala-aminoacylated tmRNA acts like a tRNA, entering the A-site of stalled ribosomes, displacing the stalled mRNA. The ribosome then switches to translate the ORF on the tmRNA; the nascent peptide is terminated with the 'tag peptide' encoded by the tmRNA and targeted for degradation. The ribosome is freed to recommence translation, which seems to be the essential function of trans-translation. The polypeptide is SsrA-binding protein (Marinobacter nauticus (strain ATCC 700491 / DSM 11845 / VT8) (Marinobacter aquaeolei)).